Reading from the N-terminus, the 1157-residue chain is DNA-directed RNA polymerase subunit beta (1157 aa).

This sequence belongs to the RNA polymerase beta chain family. In terms of assembly, the RNAP catalytic core consists of 2 alpha, 1 beta, 1 beta' and 1 omega subunit. When a sigma factor is associated with the core the holoenzyme is formed, which can initiate transcription.

It catalyses the reaction RNA(n) + a ribonucleoside 5'-triphosphate = RNA(n+1) + diphosphate. Functionally, DNA-dependent RNA polymerase catalyzes the transcription of DNA into RNA using the four ribonucleoside triphosphates as substrates. This is DNA-directed RNA polymerase subunit beta from Tropheryma whipplei (strain TW08/27) (Whipple's bacillus).